The chain runs to 202 residues: Holliday junction branch migration complex subunit RuvA (202 aa).

A domain I region spans residues 1 to 65 (MIAYVEGRLA…EDALELYGFA (65 aa)). Positions 66 to 144 (TWDERQTFIV…VEDLPAAAPL (79 aa)) are domain II. The segment at 145-155 (VTGGAPGGVFR) is flexible linker. Positions 155-202 (RDALAGLANLGYGEEEASHVLKDVLHGEPDLDVGGALRAALRALARGR) are domain III.

Belongs to the RuvA family. In terms of assembly, homotetramer. Forms an RuvA(8)-RuvB(12)-Holliday junction (HJ) complex. HJ DNA is sandwiched between 2 RuvA tetramers; dsDNA enters through RuvA and exits via RuvB. An RuvB hexamer assembles on each DNA strand where it exits the tetramer. Each RuvB hexamer is contacted by two RuvA subunits (via domain III) on 2 adjacent RuvB subunits; this complex drives branch migration. In the full resolvosome a probable DNA-RuvA(4)-RuvB(12)-RuvC(2) complex forms which resolves the HJ.

The protein localises to the cytoplasm. Its function is as follows. The RuvA-RuvB-RuvC complex processes Holliday junction (HJ) DNA during genetic recombination and DNA repair, while the RuvA-RuvB complex plays an important role in the rescue of blocked DNA replication forks via replication fork reversal (RFR). RuvA specifically binds to HJ cruciform DNA, conferring on it an open structure. The RuvB hexamer acts as an ATP-dependent pump, pulling dsDNA into and through the RuvAB complex. HJ branch migration allows RuvC to scan DNA until it finds its consensus sequence, where it cleaves and resolves the cruciform DNA. The sequence is that of Holliday junction branch migration complex subunit RuvA from Nitratidesulfovibrio vulgaris (strain ATCC 29579 / DSM 644 / CCUG 34227 / NCIMB 8303 / VKM B-1760 / Hildenborough) (Desulfovibrio vulgaris).